The following is a 518-amino-acid chain: Squalene monooxygenase 1,2 (518 aa).

The next 2 membrane-spanning stretches (helical) occupy residues 3–23 (MAFV…WTIF) and 48–68 (GPDV…YALA). FAD contacts are provided by residues 58-59 (VG), 78-79 (ER), Arg-86, Phe-91, Arg-158, Val-174, Asp-337, and Met-350. A helical transmembrane segment spans residues 448 to 468 (LFYHLFVISLSSIGQLLSPFP).

Belongs to the squalene monooxygenase family. It depends on FAD as a cofactor.

Its subcellular location is the membrane. It catalyses the reaction squalene + reduced [NADPH--hemoprotein reductase] + O2 = (S)-2,3-epoxysqualene + oxidized [NADPH--hemoprotein reductase] + H2O + H(+). The protein operates within terpene metabolism; lanosterol biosynthesis; lanosterol from farnesyl diphosphate: step 2/3. Functionally, catalyzes the stereospecific oxidation of squalene to (S)-2,3-epoxysqualene, and is considered to be a rate-limiting enzyme in steroid biosynthesis. In Brassica napus (Rape), this protein is Squalene monooxygenase 1,2 (SQP1,2).